The following is a 63-amino-acid chain: Arabinogalactan peptide 3 (63 aa).

An N-terminal signal peptide occupies residues 1–26 (MASRILYAAAVVAAVAVSSLAGVAYA). The GPI-anchor amidated serine moiety is linked to residue serine 36. Residues 37-63 (GAAAVSSSLVAAVLCPAVALLLGNLRQ) constitute a propeptide, removed in mature form.

Belongs to the AG-peptide AGP family. Post-translationally, O-glycosylated on hydroxyprolines; noncontiguous hydroxylproline residues are glycosylated with arabinogalactan. As to expression, expressed in roots, stems, leaves, flowers and seeds.

It localises to the vacuole. Its subcellular location is the aleurone grain membrane. Functionally, proteoglycan that seems to be implicated in diverse developmental roles such as differentiation, cell-cell recognition, embryogenesis and programmed cell death. The protein is Arabinogalactan peptide 3 (AGPEP3) of Oryza sativa subsp. japonica (Rice).